A 479-amino-acid chain; its full sequence is MSTSAKALTKRLIEIPEMRRIQHLHFIGIGGSGMCGIAEVMNNQGYKVSGSDITESLVTKRLEQIGIDINIGHDSKNIANADVIVVSSAIDRSNPEVKAALEARLPVVRRADMLGELMRYRHGIAIAGAHGKTTTTSLLTTMMAEGNLDPTYVIGGKLNASGKNAALGSSRFLIAEADESDASFLSLHPMAAIVTNIDQDHMETYGNSFDKLKAAYIQFLQNMPFYGLAVVCGDDPELYAMIDDIGRPVLTFGLEPFNDVQAVDLVTEGTKTHFTVLRRDHEPLRLTLNIPGVHNVYNALAAITMATDEGVDDAAITRALQKFEGVGRRFEQHASVTIDDGDVLLIDDYGHHPKEVDATIKAARQSFPERRLVMLFQPHRYSRTRDCFDDFVEVLSSVDELLLLDVYSAGESPIAGADTKALARSIRLRGAVEPTIVDKKNIAAVMQRLLKANDMLITQGAGNVGQIAIELAANDLYIK.

128–134 serves as a coordination point for ATP; it reads GAHGKTT.

The protein belongs to the MurCDEF family.

The protein localises to the cytoplasm. The enzyme catalyses UDP-N-acetyl-alpha-D-muramate + L-alanine + ATP = UDP-N-acetyl-alpha-D-muramoyl-L-alanine + ADP + phosphate + H(+). The protein operates within cell wall biogenesis; peptidoglycan biosynthesis. In terms of biological role, cell wall formation. The protein is UDP-N-acetylmuramate--L-alanine ligase of Psychrobacter arcticus (strain DSM 17307 / VKM B-2377 / 273-4).